The sequence spans 339 residues: Arylacetonitrilase (339 aa).

One can recognise a CN hydrolase domain in the interval 5 to 290; it reads IRVAVTQAEP…EGIVYADLDL (286 aa). The active-site Proton acceptor is Glu-45. Lys-126 is an active-site residue. Cys-167 (nucleophile) is an active-site residue.

It belongs to the carbon-nitrogen hydrolase superfamily. Nitrilase family.

It carries out the reaction a nitrile + 2 H2O = a carboxylate + NH4(+). It catalyses the reaction 4-chlorophenylacetonitrile + 2 H2O = 4-chlorophenylacetate + NH4(+). Nitrilase that hydrolyzes preferentially phenylacetonitrile, (R,S)-mandelonitrile, and 3-indolylacetonitrile. The protein is Arylacetonitrilase of Fusarium vanettenii (strain ATCC MYA-4622 / CBS 123669 / FGSC 9596 / NRRL 45880 / 77-13-4) (Fusarium solani subsp. pisi).